We begin with the raw amino-acid sequence, 170 residues long: Probable deoxyuridine 5'-triphosphate nucleotidohydrolase (170 aa).

It belongs to the dCTP deaminase family. Archaeal dUTPase subfamily.

The enzyme catalyses dUTP + H2O = dUMP + diphosphate + H(+). It functions in the pathway pyrimidine metabolism; dUMP biosynthesis; dUMP from dCTP (dUTP route): step 2/2. Its function is as follows. This enzyme is involved in nucleotide metabolism: it produces dUMP, the immediate precursor of thymidine nucleotides and it decreases the intracellular concentration of dUTP so that uracil cannot be incorporated into DNA. This Methanococcoides burtonii (strain DSM 6242 / NBRC 107633 / OCM 468 / ACE-M) protein is Probable deoxyuridine 5'-triphosphate nucleotidohydrolase.